We begin with the raw amino-acid sequence, 1256 residues long: Cohesin subunit SA-3 (1256 aa).

A compositionally biased stretch (low complexity) spans 1–22 (MPTLWSPSTQHHGSSSGSMSSP). The tract at residues 1-110 (MPTLWSPSTQ…GGNDKNKSVP (110 aa)) is disordered. The segment covering 72-83 (RNVRKRAAKRPP) has biased composition (basic residues). Residues 324-409 (FVHRYRDILP…NRFKDRMVSM (86 aa)) form the SCD domain. Disordered regions lie at residues 1096 to 1169 (RRLQ…GPEL) and 1230 to 1256 (KLLH…MEDF). Positions 1113 to 1125 (NSGPTTPTLTSTA) are enriched in polar residues. Over residues 1126 to 1140 (VKRRQSPRTVGKRQK) the composition is skewed to basic residues. The segment covering 1144–1166 (GPGPGPGPGPGPGPGPGPGPGPG) has biased composition (pro residues). A Phosphoserine modification is found at Ser-1234.

The protein belongs to the SCC3 family. In terms of assembly, component of the meiosis-specific cohesin complex, which also contains the SMC1 (SMC1A or SMC1B) and SMC3 heterodimer. Such complex likely contains RAD21, or the meiosis-specific related protein REC8. Interacts with CCDC79/TERB1; recruiting cohesin to telomeres to develop structural rigidity. Phosphorylated. In terms of tissue distribution, testis specific.

The protein resides in the nucleus. Its subcellular location is the chromosome. In terms of biological role, meiosis specific component of cohesin complex. The cohesin complex is required for the cohesion of sister chromatids after DNA replication. The cohesin complex apparently forms a large proteinaceous ring within which sister chromatids can be trapped. At anaphase, the complex is cleaved and dissociates from chromatin, allowing sister chromatids to segregate. The meiosis-specific cohesin complex probably replaces mitosis specific cohesin complex when it dissociates from chromatin during prophase I. The sequence is that of Cohesin subunit SA-3 (Stag3) from Rattus norvegicus (Rat).